A 282-amino-acid chain; its full sequence is uncharacterized protein (282 aa).

Positions 4-80 constitute an HTH rpiR-type domain; that stretch reads STLTSKLESL…VDYLSDEKQY (77 aa). Residues 40 to 59 constitute a DNA-binding region (H-T-H motif); it reads VAELAQAAGVSSASVIRFTR. The region spanning 125-265 is the SIS domain; that stretch reads IAQKIVEAKR…FFKYLTLTNE (141 aa).

This is an uncharacterized protein from Providencia stuartii.